The following is a 681-amino-acid chain: DNA ligase (681 aa).

Residues 45-49 (DFDFD), 94-95 (SL), and Glu-120 each bind NAD(+). Lys-122 (N6-AMP-lysine intermediate) is an active-site residue. Residues Arg-143, Glu-177, Lys-289, and Lys-313 each coordinate NAD(+). 4 residues coordinate Zn(2+): Cys-403, Cys-406, Cys-421, and Cys-426. Residues 593 to 681 (ADQQPFAGQS…SLKIDFKNLI (89 aa)) enclose the BRCT domain.

The protein belongs to the NAD-dependent DNA ligase family. LigA subfamily. The cofactor is Mg(2+). Requires Mn(2+) as cofactor.

It carries out the reaction NAD(+) + (deoxyribonucleotide)n-3'-hydroxyl + 5'-phospho-(deoxyribonucleotide)m = (deoxyribonucleotide)n+m + AMP + beta-nicotinamide D-nucleotide.. Functionally, DNA ligase that catalyzes the formation of phosphodiester linkages between 5'-phosphoryl and 3'-hydroxyl groups in double-stranded DNA using NAD as a coenzyme and as the energy source for the reaction. It is essential for DNA replication and repair of damaged DNA. The chain is DNA ligase from Leptospira interrogans serogroup Icterohaemorrhagiae serovar copenhageni (strain Fiocruz L1-130).